The primary structure comprises 996 residues: MEPTEKPSTKPSSRTLPRDTRGSLEVFNPSTQLTRPDNPVFRPEPPAWQNLSDPRGTSPQPRPQQEPAPSNPVRSDQEIAVTTSWMALKDPSPETISKKTITAEKPQKSAVAAEQRAAEWGLVLKTDTKTGKPQGVGVRNSGGTENDPNGKKTTSQRNSQNSCRSSGEMSDGDVPGGRSGIPRVSEDLKDALSTFQQTFVVSDATKPDYPIMYASAGFFNMTGYTSKEVVGRNCRFLQGSGTDADELAKIRETLAAGNNYCGRILNYKKDGTSFWNLLTIAPIKDESGKVLKFIGMQVEVSKHTEGAKEKALRPNGLPESLIRYDARQKDMATNSVTELVEAVKRPRALSESTNLHPFMTKSESDELPKKPARRMSENVVPSGRRNSGGGRRNSMQRINEIPEKKSRKSSLSFMGIKKKSESLDESIDDGFIEYGEEDDEISDRDERPESVDDKVRQKEMRKGIDLATTLERIEKNFVITDPRLPDNPIIFASDSFLELTEYSREEILGRNCRFLQGPETDLTTVKKIRNAIDNQTEVTVQLINYTKSGKKFWNIFHLQPMRDQKGEVQYFIGVQLDGSKHVEPVRNVIEETAVKEGEDLVKKTAVNIDEAVRELPDANMTPEDLWANHSKVVHCKPHRKDSPPWIAIQKVLESGEPIGLKHFKPVKPLGSGDTGSVHLVELVGTDQLFAMKAMDKAVMLNRNKVHRARAEREILDLLDHPFLPALYASFQTKTHICLITDYYPGGELFMLLDRQPRKVLKEDAVRFYAAQVVVALEYLHCQGIIYRDLKPENVLIQGNGDISLSDFDLSCLTSCKPQLLIPSIDEKKKKKQQKSQQTPIFMAEPMRASNSFVGTEEYIAPEIISGAGHTSAVDWWALGILMYEMLYGYTPFRGKTRQKTFTNVLQKDLKFPASIPASLQVKQLIFRLLQRDPKKRLGCFEGANEVKQHSFFKGINWALIRCTNPPELETPIFSGEAENGEKVVDPELEDLQTNVF.

Residues 1 to 184 (MEPTEKPSTK…PGGRSGIPRV (184 aa)) form a disordered region. A phosphoserine mark is found at S23 and S58. The span at 49–59 (QNLSDPRGTSP) shows a compositional bias: polar residues. Residues 60–70 (QPRPQQEPAPS) are compositionally biased toward pro residues. The segment covering 141–153 (SGGTENDPNGKKT) has biased composition (polar residues). Over residues 155–166 (SQRNSQNSCRSS) the composition is skewed to low complexity. Positions 184 to 257 (VSEDLKDALS…AKIRETLAAG (74 aa)) constitute a PAS 1 domain. The residue at position 185 (S185) is a Phosphoserine. N233 provides a ligand contact to FMN. The residue at position 234 (C234) is an S-4a-FMN cysteine. FMN contacts are provided by R235, Q238, R251, N266, N276, Q297, and K302. Residues 258-312 (NNYCGRILNYKKDGTSFWNLLTIAPIKDESGKVLKFIGMQVEVSKHTEGAKEKAL) enclose the PAC 1 domain. A phosphoserine mark is found at S350, S376, and S410. 2 disordered regions span residues 351-413 (ESTN…SLSF) and 434-453 (YGEE…SVDD). A compositionally biased stretch (acidic residues) spans 434–443 (YGEEDDEISD). A compositionally biased stretch (basic and acidic residues) spans 444–453 (RDERPESVDD). Residue S450 is modified to Phosphoserine. The PAS 2 domain maps to 462 to 535 (KGIDLATTLE…KKIRNAIDNQ (74 aa)). An FMN-binding site is contributed by N511. The residue at position 512 (C512) is an S-4a-FMN cysteine. FMN is bound by residues R513, Q516, R529, N544, N554, F556, and Q575. Residues 536 to 590 (TEVTVQLINYTKSGKKFWNIFHLQPMRDQKGEVQYFIGVQLDGSKHVEPVRNVIE) enclose the PAC 2 domain. One can recognise a Protein kinase domain in the interval 663–952 (FKPVKPLGSG…ANEVKQHSFF (290 aa)). Residues 669–677 (LGSGDTGSV) and K692 contribute to the ATP site. D788 acts as the Proton acceptor in catalysis. An activation loop region spans residues 806-862 (DFDLSCLTSCKPQLLIPSIDEKKKKKQQKSQQTPIFMAEPMRASNSFVGTEEYIAPE).

Belongs to the protein kinase superfamily. AGC Ser/Thr protein kinase family. Homodimer; disulfide-linked. Interacts with PKS1, PKS2, RPT2, RPT3, PHOT2 and BLUS1. Subunit of a complex made of CAR6, PHOT1 and RPT3/NPH3. Associates with CBC1 and CBC2. Binds to BHP. It depends on FMN as a cofactor. Post-translationally, autophosphorylated at Ser-185, Ser-350 and Ser-410 in response to blue light irradiation. In terms of processing, 2 molecules of FMN bind covalently to cysteines after exposure to blue light and are reversed in the dark. In terms of tissue distribution, present in guard cells (at protein level).

The protein resides in the cell membrane. Its subcellular location is the cytoplasm. The catalysed reaction is L-seryl-[protein] + ATP = O-phospho-L-seryl-[protein] + ADP + H(+). It catalyses the reaction L-threonyl-[protein] + ATP = O-phospho-L-threonyl-[protein] + ADP + H(+). With respect to regulation, autophosphorylation is inhibited by staurosporine, but not by tyrphostin 9, sphingosine, GW5074 and BML-265. Its function is as follows. Protein kinase that acts as a blue light (BL) photoreceptor in a signal-transduction pathway for photo-induced movements. Triggers the phosphorylation of AHA1 and AHA2 C-terminal penultimate Thr in guard cells to activate them and induce stomatal opening in response to blue light (BL). Also phosphorylates BLUS1, a kinase involved in stomatal opening. Mediates the phosphorylation of CBC1 in stomata, but not of CBC2, in response to blue light. Required for blue light mediated mRNA destabilization. Mediates calcium spiking of extracellular origin in response to a low rate of blue light. Also mediates rapid membrane depolarization and growth inhibition in response to blue light. Necessary for root phototropism. Involved in hypocotyl phototropism under a low rate but not under a high rate of blue light. Contributes to the chloroplast accumulation but seems not to be required for chloroplast translocation. Regulates stomata opening and photomorphogenesis response of leaf tissue. Confers sensitivity to drought. Not involved in hypocotyl elongation inhibition, anthocyanin accumulation or cotyledon opening. Involved in the regulation of leaf position and morphology via the phosphorylation of ABCB19 during blue light responses to modulate auxin distribution. The sequence is that of Phototropin-1 from Arabidopsis thaliana (Mouse-ear cress).